The sequence spans 518 residues: MNNICKLNKFIISKSSSSLSSTSSKIKTNCLIKNAKMFSSSLNLNRFYSTNNTNNNKLKKPLSIGQATFETHPYLLDKNEITKGIKMKEFKDRREKLMKNFPIGSVVVIFTPPEPMMSYDIPWSFRQNTNFNYLTGFNEPEAVLVLVKTSELDHQSYLFVRERNEEKEKWDGARCGGENVKKYFGIDFGYNLTNRDIPILGKLLKSTTDGKLYCNTTPWNQLSNKLEPFLENIKFYTVESLLQQIRLIKSDAEIKMMLKSGEIAGTSFHETMKYTGTKSSSSSSSSSSSPLNEYQVSAYFEWCVKDKGAQRMSYPPVVAGGDNGHTLHYIQNNQLLNYCDLLLMDAGCEYWGYTSDITRTFPVSGKFTEAQSEVYQAVLDVNKKCIELCKPGETINSIHLKSVELIQAHLKRLGIINESNPNDYRLYYPHSIGHYLGMDTHDTLDFDYGVTLEPGMIITIEPGIYISKYDSNVPEKYRGISIRVEDDVVIPNLNNSPLVLTHLAPKEISEIESIMSNK.

The N-terminal 48 residues, methionine 1 to tyrosine 48, are a transit peptide targeting the mitochondrion. Substrate-binding residues include tyrosine 314, aspartate 345, aspartate 356, histidine 434, histidine 441, glutamate 461, and glutamate 485. Residues aspartate 345, aspartate 356, and histidine 434 each contribute to the Mn(2+) site. Residues glutamate 461 and glutamate 485 each coordinate Mn(2+).

It belongs to the peptidase M24B family. Homodimer. It depends on Mn(2+) as a cofactor.

The protein localises to the mitochondrion. It localises to the cytoplasm. The enzyme catalyses Release of any N-terminal amino acid, including proline, that is linked to proline, even from a dipeptide or tripeptide.. In terms of biological role, catalyzes the removal of a penultimate prolyl residue from the N-termini of peptides, such as Leu-Pro-Ala. Also shows low activity towards peptides with Ala or Ser at the P1 position. The chain is Xaa-Pro aminopeptidase 3 (xpnpep3) from Dictyostelium discoideum (Social amoeba).